The sequence spans 1212 residues: DNA-directed RNA polymerase subunit beta'' (1212 aa).

4 residues coordinate Zn(2+): Cys-229, Cys-302, Cys-309, and Cys-312. The tract at residues 1162 to 1212 is disordered; the sequence is QKETSKNKKETSKNKKETSKNKKETSKNKKETSKNKKETSKNKKEASKNKK.

This sequence belongs to the RNA polymerase beta' chain family. RpoC2 subfamily. In plastids the minimal PEP RNA polymerase catalytic core is composed of four subunits: alpha, beta, beta', and beta''. When a (nuclear-encoded) sigma factor is associated with the core the holoenzyme is formed, which can initiate transcription. Requires Zn(2+) as cofactor.

The protein localises to the plastid. It localises to the chloroplast. It carries out the reaction RNA(n) + a ribonucleoside 5'-triphosphate = RNA(n+1) + diphosphate. DNA-dependent RNA polymerase catalyzes the transcription of DNA into RNA using the four ribonucleoside triphosphates as substrates. The polypeptide is DNA-directed RNA polymerase subunit beta'' (Cryptomeria japonica (Japanese cedar)).